The chain runs to 266 residues: Norfluorocurarine synthase 1 (266 aa).

In terms of domain architecture, AB hydrolase-1 spans 11–121; the sequence is HFVLVHGAGH…VMPDAVNPPS (111 aa). Active-site residues include Ser86, Asp216, and His244.

Belongs to the AB hydrolase superfamily. Homodimer.

It catalyses the reaction 17-dehydropreakuammicine + H2O = norfluorocurarine + methanol + CO2. Its pathway is alkaloid biosynthesis. Its function is as follows. Hydrolase involved in the biosynthesis of curare monoterpene indole alkaloids (MIAs), natural products such as diaboline, a pharmacologically active compound used to regulate blood pressure. Curare alkaloids act as animal glycine receptor antagonists. Catalyzes the conversion of dehydropreakuammicine to norfluorocurarine. In Strychnos sp, this protein is Norfluorocurarine synthase 1.